The sequence spans 203 residues: V-type ATP synthase subunit D (203 aa).

The protein belongs to the V-ATPase D subunit family.

Its function is as follows. Produces ATP from ADP in the presence of a proton gradient across the membrane. The chain is V-type ATP synthase subunit D from Thermotoga neapolitana (strain ATCC 49049 / DSM 4359 / NBRC 107923 / NS-E).